The sequence spans 273 residues: 5-deoxy-glucuronate isomerase (273 aa).

The protein belongs to the isomerase IolB family.

It carries out the reaction 5-deoxy-D-glucuronate = 5-dehydro-2-deoxy-D-gluconate. It participates in polyol metabolism; myo-inositol degradation into acetyl-CoA; acetyl-CoA from myo-inositol: step 4/7. Its function is as follows. Involved in the isomerization of 5-deoxy-glucuronate (5DG) to 5-dehydro-2-deoxy-D-gluconate (DKG or 2-deoxy-5-keto-D-gluconate). This is 5-deoxy-glucuronate isomerase from Listeria innocua serovar 6a (strain ATCC BAA-680 / CLIP 11262).